We begin with the raw amino-acid sequence, 529 residues long: Glucocorticoid modulatory element-binding protein 2 (529 aa).

Residues 80–162 (EEGENLEAEI…RKIMDSGELD (83 aa)) enclose the SAND domain. Cysteine 109 is a binding site for Zn(2+). DNA is bound by residues lysine 135, lysine 139, lysine 142, and arginine 153. Lysine 154 participates in a covalent cross-link: Glycyl lysine isopeptide (Lys-Gly) (interchain with G-Cter in SUMO1); alternate. Lysine 154 participates in a covalent cross-link: Glycyl lysine isopeptide (Lys-Gly) (interchain with G-Cter in SUMO2); alternate. Positions 166, 170, and 174 each coordinate Zn(2+). The stretch at 244–347 (LLDEVIQEFQ…HLSNVLMTLT (104 aa)) forms a coiled coil. Serine 372 is subject to Phosphoserine.

In terms of assembly, homodimer, and heterodimer of GMEB1 and GMEB2. Interacts with the glucocorticoid receptor (NR3C1). May interact with CREB-binding protein (CBP).

It is found in the nucleus. Its subcellular location is the cytoplasm. Trans-acting factor that binds to glucocorticoid modulatory elements (GME) present in the TAT (tyrosine aminotransferase) promoter and increases sensitivity to low concentrations of glucocorticoids. Also binds to the transferrin receptor promoter. In Rattus norvegicus (Rat), this protein is Glucocorticoid modulatory element-binding protein 2 (Gmeb2).